A 440-amino-acid chain; its full sequence is Thymidine phosphorylase (440 aa).

Belongs to the thymidine/pyrimidine-nucleoside phosphorylase family. As to quaternary structure, homodimer.

It carries out the reaction thymidine + phosphate = 2-deoxy-alpha-D-ribose 1-phosphate + thymine. The protein operates within pyrimidine metabolism; dTMP biosynthesis via salvage pathway; dTMP from thymine: step 1/2. In terms of biological role, the enzymes which catalyze the reversible phosphorolysis of pyrimidine nucleosides are involved in the degradation of these compounds and in their utilization as carbon and energy sources, or in the rescue of pyrimidine bases for nucleotide synthesis. In Salmonella dublin (strain CT_02021853), this protein is Thymidine phosphorylase.